The following is a 220-amino-acid chain: Adenylate kinase (220 aa).

Residue 13–18 (GAGKGT) participates in ATP binding. The segment at 33 to 62 (STGDILRAAVKEGTPLGLEAQSYMNRGALV) is NMP. AMP contacts are provided by residues threonine 34, arginine 39, 60–62 (ALV), 88–91 (GFPR), and glutamine 95. The LID stretch occupies residues 129-170 (GRRTCPLCKRIFHVRFNPPPAAPPFCTDHTDCPSELVQRPDD). Arginine 130 serves as a coordination point for ATP. Residues cysteine 133 and cysteine 136 each contribute to the Zn(2+) site. 139-140 (IF) serves as a coordination point for ATP. 2 residues coordinate Zn(2+): aspartate 156 and cysteine 160. Residues arginine 167 and arginine 178 each coordinate AMP. Arginine 206 provides a ligand contact to ATP.

It belongs to the adenylate kinase family. As to quaternary structure, monomer.

Its subcellular location is the cytoplasm. The catalysed reaction is AMP + ATP = 2 ADP. The protein operates within purine metabolism; AMP biosynthesis via salvage pathway; AMP from ADP: step 1/1. Its function is as follows. Catalyzes the reversible transfer of the terminal phosphate group between ATP and AMP. Plays an important role in cellular energy homeostasis and in adenine nucleotide metabolism. This is Adenylate kinase from Gloeobacter violaceus (strain ATCC 29082 / PCC 7421).